Here is a 286-residue protein sequence, read N- to C-terminus: 2-hydroxy-6-oxo-6-phenylhexa-2,4-dienoate hydrolase (286 aa).

Substrate-binding positions include 42-43, N51, K111, S180, and R190; that span reads GG. Residues 173–271 enclose the AB hydrolase-1 domain; the sequence is NVFLFDQSLI…RCVHWAQWEH (99 aa). H265 functions as the Proton acceptor in the catalytic mechanism. A substrate-binding site is contributed by W266.

This sequence belongs to the AB hydrolase superfamily. BphD family. As to quaternary structure, homodimer.

The enzyme catalyses 2,6-dioxo-6-phenylhexa-3-enoate + H2O = 2-oxopent-4-enoate + benzoate + H(+). The protein operates within xenobiotic degradation; biphenyl degradation; 2-hydroxy-2,4-pentadienoate and benzoate from biphenyl: step 4/4. Functionally, catalyzes an unusual C-C bond hydrolysis of 2-hydroxy-6-oxo-6-phenylhexa-2,4-dienoic acid (HOPDA) to produce benzoic acid and 2-hydroxy-2,4-pentadienoic acid (HPD). In Delftia acidovorans (Pseudomonas acidovorans), this protein is 2-hydroxy-6-oxo-6-phenylhexa-2,4-dienoate hydrolase.